The primary structure comprises 366 residues: Chorismate synthase (366 aa).

NADP(+) is bound by residues R48 and R54. Residues 125–127, 238–239, G278, 293–297, and R319 each bind FMN; these read RSS, NA, and KPTSS.

This sequence belongs to the chorismate synthase family. In terms of assembly, homotetramer. FMNH2 serves as cofactor.

The enzyme catalyses 5-O-(1-carboxyvinyl)-3-phosphoshikimate = chorismate + phosphate. It participates in metabolic intermediate biosynthesis; chorismate biosynthesis; chorismate from D-erythrose 4-phosphate and phosphoenolpyruvate: step 7/7. Its function is as follows. Catalyzes the anti-1,4-elimination of the C-3 phosphate and the C-6 proR hydrogen from 5-enolpyruvylshikimate-3-phosphate (EPSP) to yield chorismate, which is the branch point compound that serves as the starting substrate for the three terminal pathways of aromatic amino acid biosynthesis. This reaction introduces a second double bond into the aromatic ring system. This chain is Chorismate synthase, found in Burkholderia orbicola (strain MC0-3).